A 138-amino-acid chain; its full sequence is Cytochrome b5 (138 aa).

In terms of domain architecture, Cytochrome b5 heme-binding spans 14–90 (GRYYRLEEVQ…SETFIIGELH (77 aa)). Positions 49 and 73 each coordinate heme. A helical transmembrane segment spans residues 114–136 (SWSNWVIPAIAAIIVALMYRSYM).

It belongs to the cytochrome b5 family.

It is found in the endoplasmic reticulum membrane. Its subcellular location is the microsome membrane. Its function is as follows. Cytochrome b5 is a membrane-bound hemoprotein functioning as an electron carrier for several membrane-bound oxygenases. The protein is Cytochrome b5 (CYB5A) of Gallus gallus (Chicken).